We begin with the raw amino-acid sequence, 301 residues long: uncharacterized protein (301 aa).

The active-site Charge relay system is Thr47. Tyr136 functions as the Proton donor in the catalytic mechanism. Lys165 serves as the catalytic Schiff-base intermediate with substrate.

This sequence belongs to the DapA family. As to quaternary structure, homotetramer.

The protein resides in the cytoplasm. This is an uncharacterized protein from Thermofilum pendens (strain DSM 2475 / Hrk 5).